A 91-amino-acid chain; its full sequence is Small ribosomal subunit protein uS17 (91 aa).

It belongs to the universal ribosomal protein uS17 family. Part of the 30S ribosomal subunit.

In terms of biological role, one of the primary rRNA binding proteins, it binds specifically to the 5'-end of 16S ribosomal RNA. This chain is Small ribosomal subunit protein uS17, found in Acidithiobacillus ferrooxidans (strain ATCC 23270 / DSM 14882 / CIP 104768 / NCIMB 8455) (Ferrobacillus ferrooxidans (strain ATCC 23270)).